The primary structure comprises 317 residues: Acetyl-coenzyme A carboxylase carboxyl transferase subunit alpha (317 aa).

The region spanning 33–294 (NLDDEITRLQ…KKRLLADLAD (262 aa)) is the CoA carboxyltransferase C-terminal domain.

This sequence belongs to the AccA family. As to quaternary structure, acetyl-CoA carboxylase is a heterohexamer composed of biotin carboxyl carrier protein (AccB), biotin carboxylase (AccC) and two subunits each of ACCase subunit alpha (AccA) and ACCase subunit beta (AccD).

It localises to the cytoplasm. It carries out the reaction N(6)-carboxybiotinyl-L-lysyl-[protein] + acetyl-CoA = N(6)-biotinyl-L-lysyl-[protein] + malonyl-CoA. It participates in lipid metabolism; malonyl-CoA biosynthesis; malonyl-CoA from acetyl-CoA: step 1/1. Functionally, component of the acetyl coenzyme A carboxylase (ACC) complex. First, biotin carboxylase catalyzes the carboxylation of biotin on its carrier protein (BCCP) and then the CO(2) group is transferred by the carboxyltransferase to acetyl-CoA to form malonyl-CoA. The chain is Acetyl-coenzyme A carboxylase carboxyl transferase subunit alpha from Histophilus somni (strain 2336) (Haemophilus somnus).